The primary structure comprises 176 residues: Skp1-related protein (176 aa).

This sequence belongs to the SKP1 family. Probable component of the SCF(sel-10) E3 ubiquitin-protein ligase complex containing F-box domain-containing protein sel-10 as the substrate recognition component. Interacts with cul-1. May interact with the F-box protein mec-15. Interacts with dre-1. Interacts with syg-1. Interacts with sel-10. In terms of tissue distribution, ubiquitously expressed in the adult.

Its function is as follows. Probable essential component of SCF (SKP1-CUL1-F-box protein) E3 ubiquitin-protein ligase complexes, which mediate the ubiquitination and subsequent proteasomal degradation of target proteins. Regulates cell proliferation during embryonic and larval development. Involved in synapse elimination in early synapse development. May negatively regulate the apoptotic activity of cep-1 in response to genotoxic stress. Plays a role in sex determination. The chain is Skp1-related protein from Caenorhabditis elegans.